Reading from the N-terminus, the 187-residue chain is uncharacterized protein (187 aa).

It belongs to the isochorismatase family.

This is an uncharacterized protein from Bacillus subtilis (strain 168).